The primary structure comprises 235 residues: Endonuclease V (235 aa).

Mg(2+) is bound by residues Asp-47 and Asp-115.

The protein belongs to the endonuclease V family. The cofactor is Mg(2+).

The protein resides in the cytoplasm. It carries out the reaction Endonucleolytic cleavage at apurinic or apyrimidinic sites to products with a 5'-phosphate.. DNA repair enzyme involved in the repair of deaminated bases. Selectively cleaves double-stranded DNA at the second phosphodiester bond 3' to a deoxyinosine leaving behind the intact lesion on the nicked DNA. This chain is Endonuclease V, found in Myxococcus xanthus (strain DK1622).